The primary structure comprises 360 residues: Phospho-N-acetylmuramoyl-pentapeptide-transferase (360 aa).

The next 10 membrane-spanning stretches (helical) occupy residues 21 to 41 (YITF…LWIG), 73 to 93 (TMGG…WADL), 98 to 118 (IWFV…DDYW), 132 to 152 (WKYF…YAVG), 168 to 188 (VMPQ…VGTS), 199 to 219 (GLAI…AWAT), 236 to 256 (AGEL…FLWY), 263 to 283 (VFMG…IAVL), 288 to 308 (LLLV…ILQV), and 338 to 358 (VIVR…VTLK).

This sequence belongs to the glycosyltransferase 4 family. MraY subfamily. Mg(2+) is required as a cofactor.

Its subcellular location is the cell inner membrane. The catalysed reaction is UDP-N-acetyl-alpha-D-muramoyl-L-alanyl-gamma-D-glutamyl-meso-2,6-diaminopimeloyl-D-alanyl-D-alanine + di-trans,octa-cis-undecaprenyl phosphate = di-trans,octa-cis-undecaprenyl diphospho-N-acetyl-alpha-D-muramoyl-L-alanyl-D-glutamyl-meso-2,6-diaminopimeloyl-D-alanyl-D-alanine + UMP. It participates in cell wall biogenesis; peptidoglycan biosynthesis. Its function is as follows. Catalyzes the initial step of the lipid cycle reactions in the biosynthesis of the cell wall peptidoglycan: transfers peptidoglycan precursor phospho-MurNAc-pentapeptide from UDP-MurNAc-pentapeptide onto the lipid carrier undecaprenyl phosphate, yielding undecaprenyl-pyrophosphoryl-MurNAc-pentapeptide, known as lipid I. The polypeptide is Phospho-N-acetylmuramoyl-pentapeptide-transferase (Actinobacillus pleuropneumoniae serotype 5b (strain L20)).